Consider the following 513-residue polypeptide: MEEYEAQLLVVEQALENAADDAQRQELLALKNNLQELLALTRDTGDEAPTDELPQQGNDLDDELQRLKSELSDLEAAGSSQTALDEERQLADLRTKYTAMVGEKCSAPHEHSWGTCYHNALICGVDDEVVINSEGVLDARLRVLFTNPTHREMLPCSYYLEGECRFDEAKCRFSHGALVTGSSIRKYNPPDFHKLSRSRPVFALLPDRLWHRGRVLCVNFVEQVCRVRLDGQDHKERERDFKFEELYPLTTDQDEDDELSSEESTSSMRDASSDEAESDMDDLEEARRARMVELSLFTYKPTDRLGAWEEFTRGIGSKLMEKMGYIHGTGLGSEGRGIVTPVSAQILPQGRSLDACMELREAANGDKDYFSVERKLKRAQRRQRKADEKAYVRESQRVDVFTFLNDRVLGPGESTQQSEQVAKKAKNNELQQHSTKTLNVETVRIADEIRRKQRDMAKVKQSLERNSGDAQLQKRLQVQMQSHKQELATLQAQERSLSKEQQTRKSKNKMFEF.

The C3H1-type zinc-finger motif lies at 155-178; it reads PCSYYLEGECRFDEAKCRFSHGAL. Composition is skewed to acidic residues over residues 252–261 and 273–283; these read DQDEDDELSS and SDEAESDMDDL. The disordered stretch occupies residues 252–283; it reads DQDEDDELSSEESTSSMRDASSDEAESDMDDL. Residues 312-358 form the G-patch domain; the sequence is TRGIGSKLMEKMGYIHGTGLGSEGRGIVTPVSAQILPQGRSLDACME. Disordered regions lie at residues 411–430 and 477–513; these read PGESTQQSEQVAKKAKNNEL and QVQMQSHKQELATLQAQERSLSKEQQTRKSKNKMFEF. Positions 477-495 are enriched in polar residues; that stretch reads QVQMQSHKQELATLQAQER. Basic and acidic residues predominate over residues 496–513; that stretch reads SLSKEQQTRKSKNKMFEF.

It is found in the nucleus. Functionally, transcription repressor. This Drosophila sechellia (Fruit fly) protein is Zinc finger CCCH-type with G patch domain-containing protein.